The chain runs to 556 residues: Oxygen-dependent choline dehydrogenase (556 aa).

4-33 (DYIIIGAGSAGNVLATRLTEDPNTSVLLLE) serves as a coordination point for FAD. The active-site Proton acceptor is H473.

It belongs to the GMC oxidoreductase family. Requires FAD as cofactor.

The enzyme catalyses choline + A = betaine aldehyde + AH2. The catalysed reaction is betaine aldehyde + NAD(+) + H2O = glycine betaine + NADH + 2 H(+). Its pathway is amine and polyamine biosynthesis; betaine biosynthesis via choline pathway; betaine aldehyde from choline (cytochrome c reductase route): step 1/1. Its function is as follows. Involved in the biosynthesis of the osmoprotectant glycine betaine. Catalyzes the oxidation of choline to betaine aldehyde and betaine aldehyde to glycine betaine at the same rate. This is Oxygen-dependent choline dehydrogenase from Escherichia coli (strain K12 / DH10B).